Reading from the N-terminus, the 129-residue chain is Photosystem II extrinsic protein V (129 aa).

Residues cysteine 35, cysteine 38, histidine 39, and histidine 90 each coordinate heme c.

This sequence belongs to the cytochrome c family. PsbV subfamily. As to quaternary structure, PSII is composed of 1 copy each of membrane proteins PsbA, PsbB, PsbC, PsbD, PsbE, PsbF, PsbH, PsbI, PsbJ, PsbK, PsbL, PsbM, PsbT, PsbX, PsbY, PsbZ, Psb30/Ycf12, peripheral proteins PsbO, CyanoQ (PsbQ), PsbU, PsbV and a large number of cofactors. It forms dimeric complexes. Homodimer in crystal structure. Requires heme c as cofactor.

Its subcellular location is the cellular thylakoid membrane. Functionally, one of the extrinsic, lumenal subunits of photosystem II (PSII). PSII is a light-driven water plastoquinone oxidoreductase, using light energy to abstract electrons from H(2)O, generating a proton gradient subsequently used for ATP formation. The extrinsic proteins stabilize the structure of photosystem II oxygen-evolving complex (OEC), the ion environment of oxygen evolution and protect the OEC against heat-induced inactivation. Low-potential cytochrome c that plays a role in the OEC of PSII. The chain is Photosystem II extrinsic protein V from Limnospira maxima (Arthrospira maxima).